We begin with the raw amino-acid sequence, 492 residues long: N-succinylglutamate 5-semialdehyde dehydrogenase (492 aa).

An NAD(+)-binding site is contributed by 220 to 225 (GSANTG). Active-site residues include E243 and C277.

Belongs to the aldehyde dehydrogenase family. AstD subfamily.

It carries out the reaction N-succinyl-L-glutamate 5-semialdehyde + NAD(+) + H2O = N-succinyl-L-glutamate + NADH + 2 H(+). The protein operates within amino-acid degradation; L-arginine degradation via AST pathway; L-glutamate and succinate from L-arginine: step 4/5. Catalyzes the NAD-dependent reduction of succinylglutamate semialdehyde into succinylglutamate. In Escherichia coli O127:H6 (strain E2348/69 / EPEC), this protein is N-succinylglutamate 5-semialdehyde dehydrogenase.